Reading from the N-terminus, the 588-residue chain is Phosphoinositide phosphatase SAC8 (588 aa).

The tract at residues Phe37–Gly56 is disordered. Residues Asn40–Asp50 show a composition bias toward basic and acidic residues. Residues Leu129 to Gly455 enclose the SAC domain. The Phosphatase catalytic core signature appears at Arg390–Asn401. The next 2 helical transmembrane spans lie at Ser524 to Ile544 and Leu555 to Gly575.

In terms of tissue distribution, ubiquitous with a higher level of expression in young seedlings than in other tissues.

It localises to the endoplasmic reticulum membrane. Phosphoinositide phosphatase that hydrolyzes PtdIns(3)P and PtdIns(4)P. In Arabidopsis thaliana (Mouse-ear cress), this protein is Phosphoinositide phosphatase SAC8 (SAC8).